The chain runs to 332 residues: D-glutamate N-acetyltransferase (332 aa).

This sequence belongs to the N-acetyltransferase DgcN family.

It catalyses the reaction D-glutamate + acetyl-CoA = N-acetyl-D-glutamate + CoA + H(+). The catalysed reaction is D-aspartate + acetyl-CoA = N-acetyl-D-aspartate + CoA + H(+). The enzyme catalyses D-glutamine + acetyl-CoA = N-acetyl-D-glutamine + CoA + H(+). The protein operates within amino-acid degradation. In terms of biological role, N-acetyltransferase involved in a deamination-independent D-glutamate degradation pathway, named the DgcN-DgcA pathway. Catalyzes the transfer of the acetyl moiety from acetyl-CoA to D-glutamate to generate N-acetyl-D-glutamate. Can also acetylate D-aspartate and D-glutamine, with lower efficiency. Has low activity with D-asparagine. Cannot use succinyl-CoA. This is D-glutamate N-acetyltransferase from Pseudoalteromonas sp.